The chain runs to 526 residues: ATP synthase subunit alpha (526 aa).

Residue 171–178 coordinates ATP; the sequence is GDRQTGKT.

The protein belongs to the ATPase alpha/beta chains family. In terms of assembly, F-type ATPases have 2 components, CF(1) - the catalytic core - and CF(0) - the membrane proton channel. CF(1) has five subunits: alpha(3), beta(3), gamma(1), delta(1), epsilon(1). CF(0) has four main subunits: a(1), b(1), b'(1) and c(9-12).

It is found in the cell inner membrane. The enzyme catalyses ATP + H2O + 4 H(+)(in) = ADP + phosphate + 5 H(+)(out). Produces ATP from ADP in the presence of a proton gradient across the membrane. The alpha chain is a regulatory subunit. This Chlorobaculum tepidum (strain ATCC 49652 / DSM 12025 / NBRC 103806 / TLS) (Chlorobium tepidum) protein is ATP synthase subunit alpha.